The chain runs to 479 residues: Anaerobic nitric oxide reductase flavorubredoxin (479 aa).

The segment at 30-210 (LRGSSYNSYL…PFSRLVTPKI (181 aa)) is zinc metallo-hydrolase. 6 residues coordinate Fe cation: His79, Glu81, Asp83, His147, Asp166, and His227. In terms of domain architecture, Flavodoxin-like spans 254-393 (ITIFYDTMSN…LCRQHGRDIA (140 aa)). Residues 260–264 (TMSNN) and 342–369 (AFGSHGWSGGAVDRLSTRLQDAGFEMSL) contribute to the FMN site. The 52-residue stretch at 423–474 (GPKMQCSVCQWIYDPALGEPLQDVAPGTPWSDVPDNFLCPECSLGKDVFDVL) folds into the Rubredoxin-like domain. Fe cation is bound by residues Cys428, Cys431, Cys461, and Cys464.

In the N-terminal section; belongs to the zinc metallo-hydrolase group 3 family. In terms of assembly, homotetramer. Fe cation is required as a cofactor. The cofactor is FMN.

Its subcellular location is the cytoplasm. Its pathway is nitrogen metabolism; nitric oxide reduction. Functionally, anaerobic nitric oxide reductase; uses NADH to detoxify nitric oxide (NO), protecting several 4Fe-4S NO-sensitive enzymes. Has at least 2 reductase partners, only one of which (NorW, flavorubredoxin reductase) has been identified. NO probably binds to the di-iron center; electrons enter from the NorW at rubredoxin and are transferred sequentially to the FMN center and the di-iron center. Also able to function as an aerobic oxygen reductase. In Salmonella typhi, this protein is Anaerobic nitric oxide reductase flavorubredoxin.